A 448-amino-acid polypeptide reads, in one-letter code: Trigger factor (448 aa).

Positions 160–245 (GDMLLMKVES…IQEIREEKLP (86 aa)) constitute a PPIase FKBP-type domain.

The protein belongs to the FKBP-type PPIase family. Tig subfamily.

It is found in the cytoplasm. The enzyme catalyses [protein]-peptidylproline (omega=180) = [protein]-peptidylproline (omega=0). Involved in protein export. Acts as a chaperone by maintaining the newly synthesized protein in an open conformation. Functions as a peptidyl-prolyl cis-trans isomerase. The protein is Trigger factor of Dehalococcoides mccartyi (strain ATCC BAA-2266 / KCTC 15142 / 195) (Dehalococcoides ethenogenes (strain 195)).